Here is a 135-residue protein sequence, read N- to C-terminus: MRNVTSLGWQYLRAFVIIYLCLWAGKAVTLLLPISIPGSILGMLILFALLSSQILPSTWVKPGCHLLIRYMALLFVPIGVGVMQYYDQLTKQFGPIVVSCFVSTLVVMLVVGYSSHYVHRERKVMGSPTHTEEDK.

A run of 4 helical transmembrane segments spans residues 4–24, 30–50, 63–83, and 93–113; these read VTSL…CLWA, LLLP…FALL, GCHL…VGVM, and FGPI…VVGY.

This sequence belongs to the UPF0299 family.

The protein localises to the cell inner membrane. The sequence is that of UPF0299 membrane protein YE2790 from Yersinia enterocolitica serotype O:8 / biotype 1B (strain NCTC 13174 / 8081).